Here is a 1380-residue protein sequence, read N- to C-terminus: MSSSVTPTKYVLNSFNSVPRLSYAKSIDIKDSLTDLIKIQRDSYNAFIGVGQNTESGIKNIFESMFPIEDLLGRAVLEFVSYSIGEPQYDEYECIKRGITFSVPIRIVLRFIVWKVQEVSFKEVKYVVDEETSEKSIKYIKEQEVSIGDLPTMTPHGTFIINGIERVIVSQMHRSPGVFFDSDKGKTYSSGKLIYSARIIPYRGSWLDFEFDIKDILYFRIDRKRKLPVSLLLRALGLSNNDILNTFYDKIRYVKCEKGWIVPFVVDRFRGVRLSHDLVDVNGNVLVKANTRITLRMAKKLANDGLTEYLVPFAEIQGLFIANDLFDPSGNALIISAGENITSEHINKLELFDIKEIFVLNIDFLTVGPYILNTLFLDKNVTYEDALFEIYKVLRSGESPSLDTIKAFFDGLFFEKERYDLSTVGRIKLNDHLGLNVSEDITVLTKDDIIHVIKKLVLLRDGEGSVDDIDHLGNRRVRSVGEFIENQFRIGILRLERMIMDYMSSVNFDNAMPCDFVNPKILATVLKDFFSSSQLSQFMDQTNPLSEVTHKRRLSALGPGGLTRERAGFEVRDVHPTHYGRICPIETPEGQNIGLISSLAIYARINKHGFIESPYRKVDKGVVTDKVEYLLAMQESNYYIADASATLDENNQFVDDMLYCRHDGNFVMVKREEVDYIDVSPKQIVSVAASLIPFLENNDANRALMGSNMQRQAVPLLKADAPLIGTGMESIVAAGSGTVVLAKRGGIVHRVDGLYIVIRAFDQEKNEYLGVDVYNLRKFQRSNHNTCINQRPLVKPGDYVKANDVIADGSAIDQGELALGKNVLVAFMSWQGYNFEDSIVISSEVVKKDVFTSIHIEEFECVVRDTTLGPEKIMRSVPDINEDSLSHLDDVGIVNIGAEVSAGDILVGKVTPRPPISLPPETKLLVTIFGEKVFDCVDSSLYLPLDVEGTVVDVHVFVRRGVEENDRSLLIKQNEINGFIKERDYEIDVVSEYFYDELKRVLVNSGVQCNNQNVNDYLESTPKKDWWNVNLSDETVLLQINNLREKFDSMIQNAHSKFDQKIDKLNYGYDLPQGVLCIVKVFVAVKHNLQPGDKMSGRHGNKGVISRIVPVEDMPYLEDGTPVDIILNSLGVPSRMNVGQILETHFGWASVNLGKKIGHILDNIDELTISHLRNFLDQVYDGQDLKYNIQSMSDEDLLAFAERLRGGVPMAAPVFEGPKDSQISNLLKLADLDVSGQVDLYDGRIGEKFDRKVTVGYIYMLKLHHLVDDKIHARSVGPYGLVTQQPLGGKSHFGGQRFGEMECWALQAYGAAYTLQEMLTVKSDDIVGRVKIYESIIKGDSNFECGIPESFNVMVKELRSLCLDVALKQDKDFLSSEVNN.

The protein belongs to the RNA polymerase beta chain family. In terms of assembly, the RNAP catalytic core consists of 2 alpha, 1 beta, 1 beta' and 1 omega subunit. When a sigma factor is associated with the core the holoenzyme is formed, which can initiate transcription.

It carries out the reaction RNA(n) + a ribonucleoside 5'-triphosphate = RNA(n+1) + diphosphate. Its function is as follows. DNA-dependent RNA polymerase catalyzes the transcription of DNA into RNA using the four ribonucleoside triphosphates as substrates. The protein is DNA-directed RNA polymerase subunit beta of Ehrlichia canis (strain Jake).